The primary structure comprises 298 residues: 4-hydroxy-tetrahydrodipicolinate synthase (298 aa).

Threonine 48 serves as a coordination point for pyruvate. The active-site Proton donor/acceptor is tyrosine 137. Lysine 166 functions as the Schiff-base intermediate with substrate in the catalytic mechanism. Isoleucine 207 is a pyruvate binding site.

The protein belongs to the DapA family. Homotetramer; dimer of dimers.

The protein resides in the cytoplasm. It catalyses the reaction L-aspartate 4-semialdehyde + pyruvate = (2S,4S)-4-hydroxy-2,3,4,5-tetrahydrodipicolinate + H2O + H(+). The protein operates within amino-acid biosynthesis; L-lysine biosynthesis via DAP pathway; (S)-tetrahydrodipicolinate from L-aspartate: step 3/4. Its function is as follows. Catalyzes the condensation of (S)-aspartate-beta-semialdehyde [(S)-ASA] and pyruvate to 4-hydroxy-tetrahydrodipicolinate (HTPA). This chain is 4-hydroxy-tetrahydrodipicolinate synthase, found in Campylobacter lari (strain RM2100 / D67 / ATCC BAA-1060).